The following is a 902-amino-acid chain: Protein SYG1 (902 aa).

In terms of domain architecture, SPX spans 1–303 (MKFADHLTES…HTRELTTFMS (303 aa)). The Cytoplasmic segment spans residues 1 to 404 (MKFADHLTES…RNNRSIVQML (404 aa)). A phosphoserine mark is found at Ser172 and Ser179. A helical transmembrane segment spans residues 405 to 425 (VVGLGIGVSMTLITYTLYLGI). Over 426–435 (SSEETSFTHK) the chain is Extracellular. The chain crosses the membrane as a helical span at residues 436-456 (ILFPLWGGWYMVLLIAFLFLV). Over 457–497 (NCFIWHRTGINYRFIMLGEIQSKNGTQFFNNDFATSKIPLK) the chain is Cytoplasmic. A helical transmembrane segment spans residues 498–518 (LYFLTFFIVPCAVCSMLSFAL). The Extracellular segment spans residues 519–522 (EKLT). A helical transmembrane segment spans residues 523 to 543 (PLGFLYIGIVSFLFLCPSGLI). Topologically, residues 544–554 (PYWDKVVHTRK) are cytoplasmic. The helical transmembrane segment at 555–575 (WLVVTLIRLMMSGFFPVEFGD) threads the bilayer. Position 576 (Phe576) is a topological domain, extracellular. A helical membrane pass occupies residues 577–599 (FLGDIICSLTYSIADIAMFFCVY). Residues 600-732 (SHTPNNLCGS…NGSYSFSRKL (133 aa)) lie on the Cytoplasmic side of the membrane. The 210-residue stretch at 606–815 (LCGSSHSRAM…PIAQVGDDSM (210 aa)) folds into the EXS domain. A helical transmembrane segment spans residues 733-753 (VYYFAMIWDILIRFEWIVYAI). The Extracellular segment spans residues 754–761 (APQTIQQS). The helical transmembrane segment at 762–782 (AVTSFILALLEVLRRFVWIIF) threads the bilayer. The Cytoplasmic portion of the chain corresponds to 783–902 (RVENEHVANV…DSESEVESIM (120 aa)). Phosphoserine is present on residues Ser859 and Ser860. The disordered stretch occupies residues 882–902 (VNTVDDRSPETDSESEVESIM). Acidic residues predominate over residues 892–902 (TDSESEVESIM).

Belongs to the SYG1 (TC 2.A.94) family.

It localises to the cell membrane. Its function is as follows. May function in G-protein coupled signal transduction. This Saccharomyces cerevisiae (strain ATCC 204508 / S288c) (Baker's yeast) protein is Protein SYG1 (SYG1).